Here is a 371-residue protein sequence, read N- to C-terminus: Ferrochelatase (371 aa).

Positions 218 and 299 each coordinate Fe cation.

This sequence belongs to the ferrochelatase family.

It is found in the cytoplasm. The enzyme catalyses heme b + 2 H(+) = protoporphyrin IX + Fe(2+). The protein operates within porphyrin-containing compound metabolism; protoheme biosynthesis; protoheme from protoporphyrin-IX: step 1/1. Its function is as follows. Catalyzes the ferrous insertion into protoporphyrin IX. In Cupriavidus metallidurans (strain ATCC 43123 / DSM 2839 / NBRC 102507 / CH34) (Ralstonia metallidurans), this protein is Ferrochelatase.